Reading from the N-terminus, the 175-residue chain is Crossover junction endodeoxyribonuclease RuvC (175 aa).

Active-site residues include Asp-16, Glu-76, and Asp-148. The Mg(2+) site is built by Asp-16, Glu-76, and Asp-148.

Belongs to the RuvC family. Homodimer which binds Holliday junction (HJ) DNA. The HJ becomes 2-fold symmetrical on binding to RuvC with unstacked arms; it has a different conformation from HJ DNA in complex with RuvA. In the full resolvosome a probable DNA-RuvA(4)-RuvB(12)-RuvC(2) complex forms which resolves the HJ. It depends on Mg(2+) as a cofactor.

The protein resides in the cytoplasm. The catalysed reaction is Endonucleolytic cleavage at a junction such as a reciprocal single-stranded crossover between two homologous DNA duplexes (Holliday junction).. Functionally, the RuvA-RuvB-RuvC complex processes Holliday junction (HJ) DNA during genetic recombination and DNA repair. Endonuclease that resolves HJ intermediates. Cleaves cruciform DNA by making single-stranded nicks across the HJ at symmetrical positions within the homologous arms, yielding a 5'-phosphate and a 3'-hydroxyl group; requires a central core of homology in the junction. The consensus cleavage sequence is 5'-(A/T)TT(C/G)-3'. Cleavage occurs on the 3'-side of the TT dinucleotide at the point of strand exchange. HJ branch migration catalyzed by RuvA-RuvB allows RuvC to scan DNA until it finds its consensus sequence, where it cleaves and resolves the cruciform DNA. The protein is Crossover junction endodeoxyribonuclease RuvC of Bradyrhizobium sp. (strain BTAi1 / ATCC BAA-1182).